We begin with the raw amino-acid sequence, 227 residues long: ATP synthase F(0) complex subunit a (227 aa).

6 helical membrane-spanning segments follow: residues 14-34 (FLGI…IPTP), 73-93 (LASL…PYIF), 98-118 (QLSL…LIGM), 137-157 (ALIP…PLAL), 179-199 (VFVL…LLLL), and 203-223 (LEVA…SLYL).

It belongs to the ATPase A chain family. Component of the ATP synthase complex composed at least of ATP5F1A/subunit alpha, ATP5F1B/subunit beta, ATP5MC1/subunit c (homooctomer), MT-ATP6/subunit a, MT-ATP8/subunit 8, ATP5ME/subunit e, ATP5MF/subunit f, ATP5MG/subunit g, ATP5MK/subunit k, ATP5MJ/subunit j, ATP5F1C/subunit gamma, ATP5F1D/subunit delta, ATP5F1E/subunit epsilon, ATP5PF/subunit F6, ATP5PB/subunit b, ATP5PD/subunit d, ATP5PO/subunit OSCP. ATP synthase complex consists of a soluble F(1) head domain (subunits alpha(3) and beta(3)) - the catalytic core - and a membrane F(0) domain - the membrane proton channel (subunits c, a, 8, e, f, g, k and j). These two domains are linked by a central stalk (subunits gamma, delta, and epsilon) rotating inside the F1 region and a stationary peripheral stalk (subunits F6, b, d, and OSCP). Interacts with DNAJC30; interaction is direct.

It is found in the mitochondrion inner membrane. It carries out the reaction H(+)(in) = H(+)(out). Its function is as follows. Subunit a, of the mitochondrial membrane ATP synthase complex (F(1)F(0) ATP synthase or Complex V) that produces ATP from ADP in the presence of a proton gradient across the membrane which is generated by electron transport complexes of the respiratory chain. ATP synthase complex consist of a soluble F(1) head domain - the catalytic core - and a membrane F(1) domain - the membrane proton channel. These two domains are linked by a central stalk rotating inside the F(1) region and a stationary peripheral stalk. During catalysis, ATP synthesis in the catalytic domain of F(1) is coupled via a rotary mechanism of the central stalk subunits to proton translocation. With the subunit c (ATP5MC1), forms the proton-conducting channel in the F(0) domain, that contains two crucial half-channels (inlet and outlet) that facilitate proton movement from the mitochondrial intermembrane space (IMS) into the matrix. Protons are taken up via the inlet half-channel and released through the outlet half-channel, following a Grotthuss mechanism. This Gadus morhua (Atlantic cod) protein is ATP synthase F(0) complex subunit a.